The following is a 140-amino-acid chain: uncharacterized protein (140 aa).

Helical transmembrane passes span 4–21 (ILKI…YLFG) and 26–48 (LVKV…SGYL).

The protein belongs to the bacteriophage holin family. Cp-1 holin subfamily.

It is found in the cell membrane. This is an uncharacterized protein from Listeria innocua serovar 6a (strain ATCC BAA-680 / CLIP 11262).